Here is a 369-residue protein sequence, read N- to C-terminus: Peptide chain release factor 2 (369 aa).

An N5-methylglutamine modification is found at Gln-251.

This sequence belongs to the prokaryotic/mitochondrial release factor family. Methylated by PrmC. Methylation increases the termination efficiency of RF2.

It is found in the cytoplasm. In terms of biological role, peptide chain release factor 2 directs the termination of translation in response to the peptide chain termination codons UGA and UAA. The sequence is that of Peptide chain release factor 2 (prfB) from Thermotoga maritima (strain ATCC 43589 / DSM 3109 / JCM 10099 / NBRC 100826 / MSB8).